The chain runs to 386 residues: Indole-3-acetate O-methyltransferase 1 (386 aa).

S-adenosyl-L-methionine is bound at residue Tyr-30. Residues Tyr-30 and 33–37 (NSQAQ) each bind substrate. S-adenosyl-L-methionine contacts are provided by residues Gly-72, 72–73 (GC), Asn-78, 108–111 (FSDL), Asp-110, 152–154 (SFY), and 169–171 (AFS). Residue 170-174 (FSLHW) participates in substrate binding. Mg(2+)-binding residues include Asn-191, Val-195, Arg-277, Asp-278, Phe-280, and Asn-281. Ser-334 is a substrate binding site.

Belongs to the methyltransferase superfamily. SABATH family. Homodimer. Requires Mg(2+) as cofactor. Expressed in seedling roots and leaves. Expressed in the stigma, funiculus, and vascular bundles in sepals, petals and stamens.

The catalysed reaction is (indol-3-yl)acetate + S-adenosyl-L-methionine = methyl (indol-3-yl)acetate + S-adenosyl-L-homocysteine. Functionally, catalyzes the methylation of the free carboxyl end of the plant hormone indole-3-acetic acid (IAA). Converts IAA to IAA methyl ester (MeIAA). Regulates IAA activities by IAA methylation. Methylation of IAA plays an important role in regulating plant development and auxin homeostasis. Required for correct leaf pattern formation. MeIAA seems to be an inactive form of IAA. The polypeptide is Indole-3-acetate O-methyltransferase 1 (IAMT1) (Arabidopsis thaliana (Mouse-ear cress)).